Consider the following 349-residue polypeptide: Heat-inducible transcription repressor HrcA (349 aa).

Belongs to the HrcA family.

Negative regulator of class I heat shock genes (grpE-dnaK-dnaJ and groELS operons). Prevents heat-shock induction of these operons. The polypeptide is Heat-inducible transcription repressor HrcA (Xylella fastidiosa (strain 9a5c)).